A 164-amino-acid polypeptide reads, in one-letter code: 2S seed storage protein 1 (164 aa).

Positions 1–21 (MANKLFLVCAALALCFLLTNA) are cleaved as a signal peptide. 3 consecutive propeptides follow at residues 22–37 (SIYR…DATN), 74–83 (EFDFEDDMEN), and 163–164 (FY).

The protein belongs to the 2S seed storage albumins family. The mature protein consists of a small and a large chain linked by disulfide bonds.

Functionally, this is a 2S seed storage protein. This is 2S seed storage protein 1 (AT2S1) from Arabidopsis thaliana (Mouse-ear cress).